Here is a 302-residue protein sequence, read N- to C-terminus: Sulfate adenylyltransferase subunit 2 (302 aa).

Belongs to the PAPS reductase family. CysD subfamily. Heterodimer composed of CysD, the smaller subunit, and CysN.

The enzyme catalyses sulfate + ATP + H(+) = adenosine 5'-phosphosulfate + diphosphate. It participates in sulfur metabolism; hydrogen sulfide biosynthesis; sulfite from sulfate: step 1/3. In terms of biological role, with CysN forms the ATP sulfurylase (ATPS) that catalyzes the adenylation of sulfate producing adenosine 5'-phosphosulfate (APS) and diphosphate, the first enzymatic step in sulfur assimilation pathway. APS synthesis involves the formation of a high-energy phosphoric-sulfuric acid anhydride bond driven by GTP hydrolysis by CysN coupled to ATP hydrolysis by CysD. The chain is Sulfate adenylyltransferase subunit 2 from Klebsiella pneumoniae (strain 342).